The chain runs to 864 residues: Carbohydrate-responsive element-binding protein (864 aa).

Disordered regions lie at residues 15–41 (PRVV…AGGL) and 53–77 (MVSS…LADF). 3 positions are modified to phosphoserine: serine 20, serine 23, and serine 25. Residue threonine 27 is modified to Phosphothreonine. A Phosphoserine modification is found at serine 196. Disordered regions lie at residues 332 to 397 (SSGI…APGP), 449 to 468 (PGVS…QPGP), 489 to 533 (PHFT…TARD), 547 to 570 (PEQA…PQDT), and 583 to 602 (PIPA…LAPP). Residues 351–368 (GMTPHSGNTRLQARNSCS) show a composition bias toward polar residues. The segment covering 513–531 (ASPPTLASATASPTATATA) has biased composition (low complexity). Serine 566 is modified (phosphoserine; by AMPK). Over residues 583 to 596 (PIPAPTPPRPPPGP) the composition is skewed to pro residues. Serine 614, serine 626, and serine 643 each carry phosphoserine. The bHLH domain occupies 661–715 (NRRITHISAEQKRRFNIKLGFDTLHGLVSTLSAQPSLKVSKATTLQKTAEYILML). Residues 715–736 (LQQERAAMQEEAQQLRDEIEEL) are leucine-zipper.

In terms of assembly, binds DNA as a heterodimer with TCFL4/MLX. Post-translationally, phosphorylation at Ser-566 by AMPK inactivates the DNA-binding activity. Expressed in the ventricular and intermediate zones of the developing spinal cord of 12.5 dpc embryos. In later embryos expressed in a variety of tissues.

The protein localises to the nucleus. Functionally, transcriptional repressor. Binds to the canonical and non-canonical E box sequences 5'-CACGTG-3'. This chain is Carbohydrate-responsive element-binding protein (Mlxipl), found in Mus musculus (Mouse).